Reading from the N-terminus, the 159-residue chain is Transcription elongation factor GreA (159 aa).

A coiled-coil region spans residues 45–67 (NAEYHEARKEQSFVEGKIRELQL).

Belongs to the GreA/GreB family.

Functionally, necessary for efficient RNA polymerase transcription elongation past template-encoded arresting sites. The arresting sites in DNA have the property of trapping a certain fraction of elongating RNA polymerases that pass through, resulting in locked ternary complexes. Cleavage of the nascent transcript by cleavage factors such as GreA or GreB allows the resumption of elongation from the new 3'terminus. GreA releases sequences of 2 to 3 nucleotides. The chain is Transcription elongation factor GreA from Neorickettsia sennetsu (strain ATCC VR-367 / Miyayama) (Ehrlichia sennetsu).